A 280-amino-acid chain; its full sequence is uncharacterized protein (280 aa).

The N-terminal stretch at 1 to 21 is a signal peptide; it reads MRPVIKVGLSTASVYPLRAEA.

The protein to M.tuberculosis Rv0498 and S.coelicolor SCO3347.

This is an uncharacterized protein from Mycobacterium leprae (strain TN).